A 70-amino-acid chain; its full sequence is Small ribosomal subunit protein bS21 (70 aa).

Belongs to the bacterial ribosomal protein bS21 family.

This Helicobacter pylori (strain P12) protein is Small ribosomal subunit protein bS21.